The following is a 562-amino-acid chain: MASSGTTSTRKRFTGAEFIVHFLEQQGIKIVTGIPGGSILPVYDALSQSTQIRHILARHEQGAGFIAQGMARTDGKPAVCMACSGPGATNLVTAIADARLDSIPLICITGQVPASMIGTDAFQEVDTYGISIPITKHNYLVRHIEELPQVMSDAFRIAQSGRPGPVWIDIPKDVQTAVFEIETQPAMAEKAAAPAFSEESIRDAAAMINAAKRPVLYLGGGVINAPARVRELAEKAQLPTTMTLMALGMLPKAHPLSLGMLGMHGVRSTNYILQEADLLIVLGARFDDRAIGKTEQFCPNAKIIHVDIDRAELGKIKQPHVAIQADVDDVLAQLIPLVEAQPRAEWHQLVADLQREFPCPIPKACDPLSHYGLINAVAACVDDNAIITTDVGQHQMWTAQAYPLNRPRQWLTSGGLGTMGFGLPAAIGAALANPDRKVLCFSGDGSLMMNIQEMATASENQLDVKIILMNNEALGLVHQQQSLFYEQGVFAATYPGKINFMQIAAGFGLETCDLNNEADPQASLQEIINRPGPALIHVRIDAEEKVYPMVPPGAANTEMVGE.

E60 is a thiamine diphosphate binding site. FAD-binding positions include R162, 264-285 (HGVR…LGAR), and 307-326 (DIDR…IQAD). The thiamine pyrophosphate binding stretch occupies residues 393–473 (QHQMWTAQAY…VKIILMNNEA (81 aa)). Residues D444 and N471 each contribute to the Mg(2+) site.

It belongs to the TPP enzyme family. As to quaternary structure, dimer of large and small chains. Mg(2+) is required as a cofactor. Thiamine diphosphate serves as cofactor.

The catalysed reaction is 2 pyruvate + H(+) = (2S)-2-acetolactate + CO2. The protein operates within amino-acid biosynthesis; L-isoleucine biosynthesis; L-isoleucine from 2-oxobutanoate: step 1/4. It participates in amino-acid biosynthesis; L-valine biosynthesis; L-valine from pyruvate: step 1/4. In Escherichia coli (strain K12), this protein is Acetolactate synthase isozyme 1 large subunit (ilvB).